Here is a 146-residue protein sequence, read N- to C-terminus: Protein archease (146 aa).

Residues D16, D145, and I146 each contribute to the Ca(2+) site.

This sequence belongs to the archease family.

In terms of biological role, activates the tRNA-splicing ligase complex by facilitating the enzymatic turnover of catalytic subunit RtcB. Acts by promoting the guanylylation of RtcB, a key intermediate step in tRNA ligation. Can also alter the NTP specificity of RtcB such that ATP, dGTP or ITP is used efficiently. This Methanosarcina acetivorans (strain ATCC 35395 / DSM 2834 / JCM 12185 / C2A) protein is Protein archease.